Consider the following 137-residue polypeptide: Large ribosomal subunit protein uL16 (137 aa).

It belongs to the universal ribosomal protein uL16 family. In terms of assembly, part of the 50S ribosomal subunit.

Functionally, binds 23S rRNA and is also seen to make contacts with the A and possibly P site tRNAs. In Stenotrophomonas maltophilia (strain R551-3), this protein is Large ribosomal subunit protein uL16.